The sequence spans 892 residues: Polyribonucleotide nucleotidyltransferase (892 aa).

A disordered region spans residues 407-427 (YMHNYEMPPYSTGETGRVGSP). Residues Asp-521 and Asp-527 each coordinate Mg(2+). Positions 587-646 (PRIITTTVPVDKIGEVIGPKGKMINQIQEDTGAEIAIEDDGTVYISSEGGEAAEKAKEII) constitute a KH domain. One can recognise an S1 motif domain in the interval 658–730 (GETYNGKVVK…DRGKISLAIP (73 aa)). The segment at 727-892 (LAIPGFEDQE…VRRDFDPFED (166 aa)) is disordered. 2 stretches are compositionally biased toward basic and acidic residues: residues 739 to 844 (APRR…DRRS) and 851 to 877 (RRDDRNPRYAADENYDEYRADREERSE).

Belongs to the polyribonucleotide nucleotidyltransferase family. Mg(2+) serves as cofactor.

Its subcellular location is the cytoplasm. It carries out the reaction RNA(n+1) + phosphate = RNA(n) + a ribonucleoside 5'-diphosphate. Its function is as follows. Involved in mRNA degradation. Catalyzes the phosphorolysis of single-stranded polyribonucleotides processively in the 3'- to 5'-direction. The chain is Polyribonucleotide nucleotidyltransferase from Bifidobacterium adolescentis (strain ATCC 15703 / DSM 20083 / NCTC 11814 / E194a).